We begin with the raw amino-acid sequence, 98 residues long: PqqA binding protein (98 aa).

Belongs to the PqqD family. In terms of assembly, monomer. Interacts with PqqE.

It participates in cofactor biosynthesis; pyrroloquinoline quinone biosynthesis. Its function is as follows. Functions as a PqqA binding protein and presents PqqA to PqqE, in the pyrroloquinoline quinone (PQQ) biosynthetic pathway. In Rhizobium meliloti (strain 1021) (Ensifer meliloti), this protein is PqqA binding protein.